We begin with the raw amino-acid sequence, 331 residues long: Tryptophan--tRNA ligase (331 aa).

ATP contacts are provided by residues 10-12 and 18-19; these read QPS and GN. Positions 11-19 match the 'HIGH' region motif; the sequence is PSGQLTLGN. Aspartate 133 is a binding site for L-tryptophan. ATP is bound by residues 145–147, valine 184, and 193–197; these read GED and KMSKS. Positions 193–197 match the 'KMSKS' region motif; the sequence is KMSKS.

Belongs to the class-I aminoacyl-tRNA synthetase family. Homodimer.

It localises to the cytoplasm. It carries out the reaction tRNA(Trp) + L-tryptophan + ATP = L-tryptophyl-tRNA(Trp) + AMP + diphosphate + H(+). Its function is as follows. Catalyzes the attachment of tryptophan to tRNA(Trp). This is Tryptophan--tRNA ligase from Listeria monocytogenes serotype 4b (strain F2365).